A 277-amino-acid polypeptide reads, in one-letter code: Large ribosomal subunit protein uL2 (277 aa).

The segment at 222 to 258 (GSVMNPCDHPHGGGEGRSPIGRPSPVTPWGKPALGYK) is disordered.

Belongs to the universal ribosomal protein uL2 family. As to quaternary structure, part of the 50S ribosomal subunit. Forms a bridge to the 30S subunit in the 70S ribosome.

Its function is as follows. One of the primary rRNA binding proteins. Required for association of the 30S and 50S subunits to form the 70S ribosome, for tRNA binding and peptide bond formation. It has been suggested to have peptidyltransferase activity; this is somewhat controversial. Makes several contacts with the 16S rRNA in the 70S ribosome. This is Large ribosomal subunit protein uL2 from Clostridium perfringens (strain 13 / Type A).